Here is a 216-residue protein sequence, read N- to C-terminus: 2-hydroxy-3-keto-5-methylthiopentenyl-1-phosphate phosphatase (216 aa).

It belongs to the HAD-like hydrolase superfamily. MtnX family.

The enzyme catalyses 2-hydroxy-5-methylsulfanyl-3-oxopent-1-enyl phosphate + H2O = 1,2-dihydroxy-5-(methylsulfanyl)pent-1-en-3-one + phosphate. It participates in amino-acid biosynthesis; L-methionine biosynthesis via salvage pathway; L-methionine from S-methyl-5-thio-alpha-D-ribose 1-phosphate: step 4/6. Its function is as follows. Dephosphorylates 2-hydroxy-3-keto-5-methylthiopentenyl-1-phosphate (HK-MTPenyl-1-P) yielding 1,2-dihydroxy-3-keto-5-methylthiopentene (DHK-MTPene). This Exiguobacterium sp. (strain ATCC BAA-1283 / AT1b) protein is 2-hydroxy-3-keto-5-methylthiopentenyl-1-phosphate phosphatase.